A 584-amino-acid polypeptide reads, in one-letter code: DNA ligase (584 aa).

Residue E249 coordinates ATP. The active-site N6-AMP-lysine intermediate is K251. 6 residues coordinate ATP: R256, R271, E301, F341, R416, and K422.

The protein belongs to the ATP-dependent DNA ligase family. Mg(2+) is required as a cofactor.

The catalysed reaction is ATP + (deoxyribonucleotide)n-3'-hydroxyl + 5'-phospho-(deoxyribonucleotide)m = (deoxyribonucleotide)n+m + AMP + diphosphate.. Functionally, DNA ligase that seals nicks in double-stranded DNA during DNA replication, DNA recombination and DNA repair. In Pyrobaculum neutrophilum (strain DSM 2338 / JCM 9278 / NBRC 100436 / V24Sta) (Thermoproteus neutrophilus), this protein is DNA ligase.